We begin with the raw amino-acid sequence, 591 residues long: UvrABC system protein C (591 aa).

Positions 14 to 91 (DQPGCYLMKD…IKKHDPKYNV (78 aa)) constitute a GIY-YIG domain. Positions 196–231 (KEVKVELEKKMHKAAEELNFERAKELRDTLGYMEAV) constitute a UVR domain.

The protein belongs to the UvrC family. As to quaternary structure, interacts with UvrB in an incision complex.

The protein localises to the cytoplasm. Its function is as follows. The UvrABC repair system catalyzes the recognition and processing of DNA lesions. UvrC both incises the 5' and 3' sides of the lesion. The N-terminal half is responsible for the 3' incision and the C-terminal half is responsible for the 5' incision. The polypeptide is UvrABC system protein C (Halalkalibacterium halodurans (strain ATCC BAA-125 / DSM 18197 / FERM 7344 / JCM 9153 / C-125) (Bacillus halodurans)).